Consider the following 694-residue polypeptide: Cyclic nucleotide-gated channel beta-3 (694 aa).

The Cytoplasmic portion of the chain corresponds to 1–210 (MLKSLTVKFN…SIDSYTDRVY (210 aa)). Disordered stretches follow at residues 24-82 (CPNL…DPEC) and 146-177 (ENFP…KEHQ). 2 stretches are compositionally biased toward polar residues: residues 26–40 (NLSS…QGDN) and 153–168 (ASSQ…PKQE). Residues 211–234 (LLWLLLVTIAYNWNCWLLPVRLVF) traverse the membrane as a helical segment. Residues 235–241 (PCQTPDN) lie on the Extracellular side of the membrane. The chain crosses the membrane as a helical span at residues 242-262 (KNYWIITDIVCDIIYLCDILL). At 263–291 (IQPRLQFVRGGEIIVDSNELKRNYRSSTK) the chain is on the cytoplasmic side. A helical membrane pass occupies residues 292-309 (FRMDVASLLPFEVLYIFF). Residues 310 to 312 (GVN) lie on the Extracellular side of the membrane. Residues 313–327 (PIFRANRILKYTSFF) form a helical membrane-spanning segment. Topologically, residues 328–340 (EFNHHLESIMDKA) are cytoplasmic. The tract at residues 340-439 (AYVYRVIRTT…IGQMRDVIGA (100 aa)) is ion conduction pathway. The helical transmembrane segment at 341 to 363 (YVYRVIRTTGYLLFLLHINACVY) threads the bilayer. At 364 to 385 (YWASDYEGIGSTKWVYNGEGNK) the chain is on the extracellular side. A run of 2 helical transmembrane segments spans residues 386–412 (YLRC…SFEI) and 413–437 (VFQF…RDVI). The selectivity filter stretch occupies residues 399–402 (TIGG). The Cytoplasmic segment spans residues 438–694 (GAATANQNYF…KGKRKTTTQK (257 aa)). The interval 442–518 (ANQNYFQACM…SIIDKVELFK (77 aa)) is C-linker. The tract at residues 522-638 (TQMIYDLLLR…LLMKKAKILL (117 aa)) is cyclic nucleotide-binding domain. The 3',5'-cyclic GMP site is built by G583, E584, R596, and T597.

Belongs to the cyclic nucleotide-gated cation channel (TC 1.A.1.5) family. CNGB3 subfamily. As to quaternary structure, forms heterotetrameric channels composed of CNGA3 and CNGB3 subunits with 3:1 stoichiometry. As to expression, small subset of retinal photoreceptor cells and testis.

The protein resides in the cell membrane. It catalyses the reaction Ca(2+)(in) = Ca(2+)(out). The catalysed reaction is Na(+)(in) = Na(+)(out). It carries out the reaction K(+)(in) = K(+)(out). The enzyme catalyses NH4(+)(in) = NH4(+)(out). It catalyses the reaction Rb(+)(in) = Rb(+)(out). The catalysed reaction is Li(+)(in) = Li(+)(out). It carries out the reaction Cs(+)(in) = Cs(+)(out). Functionally, pore-forming subunit of the cone cyclic nucleotide-gated channel. Mediates cone photoresponses at bright light converting transient changes in intracellular cGMP levels into electrical signals. In the dark, cGMP levels are high and keep the channel open enabling a steady inward current carried by Na(+) and Ca(2+) ions that leads to membrane depolarization and neurotransmitter release from synaptic terminals. Upon photon absorption cGMP levels decline leading to channel closure and membrane hyperpolarization that ultimately slows neurotransmitter release and signals the presence of light, the end point of the phototransduction cascade. Conducts cGMP- and cAMP-gated ion currents, with permeability for monovalent and divalent cations. This Mus musculus (Mouse) protein is Cyclic nucleotide-gated channel beta-3.